The primary structure comprises 279 residues: Phycobilisome rod-core linker polypeptide CpcG1 (279 aa).

Positions 11 to 189 constitute a PBS-linker domain; that stretch reads SSQNQRVEGY…YWRDRQTLNA (179 aa).

This sequence belongs to the phycobilisome linker protein family. In terms of assembly, part of the phycobilisome, a hemidiscoidal structure that is composed of two distinct substructures: a core complex and a number of rods radiating from the core.

It localises to the cellular thylakoid membrane. In terms of biological role, rod-core linker protein required for attachment of phycocyanin to allophycocyanin in cores of phycobilisomes. Linker polypeptides determine the state of aggregation and the location of the disk-shaped phycobiliprotein units within the phycobilisome and modulate their spectroscopic properties in order to mediate a directed and optimal energy transfer. The sequence is that of Phycobilisome rod-core linker polypeptide CpcG1 from Nostoc sp. (strain PCC 7120 / SAG 25.82 / UTEX 2576).